The sequence spans 43 residues: Potassium channel toxin gamma-KTx 3.3 (43 aa).

Cystine bridges form between Cys5/Cys23, Cys11/Cys34, Cys20/Cys39, and Cys24/Cys41.

Belongs to the ergtoxin family. Gamma-KTx 3 subfamily. Expressed by the venom gland.

The protein localises to the secreted. Functionally, blocks Kv11/ERG potassium channels. This Centruroides sculpturatus (Arizona bark scorpion) protein is Potassium channel toxin gamma-KTx 3.3.